The primary structure comprises 388 residues: Deoxyguanosinetriphosphate triphosphohydrolase-like protein (388 aa).

Residues 24 to 44 (HSAQTRGRVHAEPPSTSRTEF) form a disordered region. In terms of domain architecture, HD spans 78–209 (RLTHSLEVAQ…ANLADEVAYN (132 aa)).

This sequence belongs to the dGTPase family. Type 2 subfamily.

In Ralstonia pickettii (strain 12J), this protein is Deoxyguanosinetriphosphate triphosphohydrolase-like protein.